The chain runs to 269 residues: Phosphate import ATP-binding protein PstB (269 aa).

In terms of domain architecture, ABC transporter spans 21-264; that stretch reads IEIKDFNFFY…PKDRRTENYI (244 aa). 55–62 serves as a coordination point for ATP; sequence GPSGCGKT.

It belongs to the ABC transporter superfamily. Phosphate importer (TC 3.A.1.7) family. The complex is composed of two ATP-binding proteins (PstB), two transmembrane proteins (PstC and PstA) and a solute-binding protein (PstS).

The protein localises to the cell membrane. The catalysed reaction is phosphate(out) + ATP + H2O = ADP + 2 phosphate(in) + H(+). Part of the ABC transporter complex PstSACB involved in phosphate import. Responsible for energy coupling to the transport system. The polypeptide is Phosphate import ATP-binding protein PstB (Mycoplasma capricolum subsp. capricolum (strain California kid / ATCC 27343 / NCTC 10154)).